Consider the following 425-residue polypeptide: Proteinase-activated receptor 1 (425 aa).

Positions methionine 1–serine 21 are cleaved as a signal peptide. The propeptide at alanine 22–arginine 41 is removed for receptor activation. N-linked (GlcNAc...) asparagine glycans are attached at residues asparagine 35, asparagine 62, and asparagine 75. Residues serine 42 to threonine 102 are Extracellular-facing. A helical transmembrane segment spans residues leucine 103 to isoleucine 128. The Cytoplasmic segment spans residues leucine 129–alanine 137. Residues valine 138–phenylalanine 157 form a helical membrane-spanning segment. Residues lysine 158–arginine 176 lie on the Extracellular side of the membrane. A disulfide bridge links cysteine 175 with cysteine 254. A helical membrane pass occupies residues phenylalanine 177 to isoleucine 198. Residues aspartate 199–arginine 218 are Cytoplasmic-facing. Residues alanine 219–leucine 239 form a helical membrane-spanning segment. At lysine 240–alanine 268 the chain is on the extracellular side. N-linked (GlcNAc...) asparagine glycosylation is found at asparagine 250 and asparagine 259. A helical membrane pass occupies residues tyrosine 269–valine 288. Over cysteine 289 to alanine 311 the chain is Cytoplasmic. The chain crosses the membrane as a helical span at residues leucine 312–isoleucine 334. The Extracellular portion of the chain corresponds to alanine 335–tyrosine 350. Residues phenylalanine 351–alanine 374 form a helical membrane-spanning segment. The Cytoplasmic portion of the chain corresponds to serine 375 to threonine 425. Serine 418 carries the post-translational modification Phosphoserine.

The protein belongs to the G-protein coupled receptor 1 family. Proteolytic cleavage by thrombin generates a new N-terminus that functions as a tethered ligand. Also proteolytically cleaved by cathepsin CTSG. Cleavage at 41-Arg-|-Ser-42 by CTSG results in receptor activation while cleavage at 55-Phe-|-Trp-56 results in inhibition of receptor activation. In terms of processing, phosphorylated in the C-terminal tail; probably mediating desensitization prior to the uncoupling and internalization of the receptor.

It is found in the cell membrane. In terms of biological role, high affinity receptor that binds the activated thrombin, leading to calcium release from intracellular stores. The thrombin-activated receptor signaling pathway is mediated through PTX-insensitive G proteins, activation of phospholipase C resulting in the production of 1D-myo-inositol 1,4,5-trisphosphate (InsP3) which binds to InsP3 receptors causing calcium release from the stores. In astrocytes, the calcium released into the cytosol allows the Ca(2+)-dependent release of L-glutamate into the synaptic cleft through BEST1, that targets the neuronal postsynaptic GRIN2A/NMDAR receptor resulting in the synaptic plasticity regulation. May play a role in platelets activation and in vascular development. Mediates up-regulation of pro-inflammatory cytokines, such as MCP-1/CCL2 and IL6, triggered by coagulation factor Xa (F10) in cardiac fibroblasts and umbilical vein endothelial cells. The chain is Proteinase-activated receptor 1 from Papio hamadryas (Hamadryas baboon).